We begin with the raw amino-acid sequence, 440 residues long: Xylose isomerase (440 aa).

Active-site residues include H101 and D104. E232, E268, H271, D296, D307, D309, and D339 together coordinate Mg(2+).

The protein belongs to the xylose isomerase family. In terms of assembly, homotetramer. Mg(2+) is required as a cofactor.

The protein localises to the cytoplasm. It catalyses the reaction alpha-D-xylose = alpha-D-xylulofuranose. This Cronobacter sakazakii (strain ATCC BAA-894) (Enterobacter sakazakii) protein is Xylose isomerase.